A 157-amino-acid polypeptide reads, in one-letter code: NudC domain-containing protein 2 (157 aa).

At serine 2 the chain carries N-acetylserine. The region spanning 14–104 (CGTPWGQWYQ…DAANCWTSLL (91 aa)) is the CS domain. Residues 134 to 157 (FDFSGAEISGNYTKGGPDFSNLEK) are disordered. Residue serine 142 is modified to Phosphoserine. Tyrosine 145 is modified (phosphotyrosine).

Interacts with LIS1.

It localises to the chromosome. It is found in the centromere. Its subcellular location is the kinetochore. The protein localises to the cytoplasm. The protein resides in the cytoskeleton. It localises to the microtubule organizing center. It is found in the centrosome. Its subcellular location is the spindle pole. May regulate the LIS1/dynein pathway by stabilizing LIS1 with Hsp90 chaperone. This is NudC domain-containing protein 2 (Nudcd2) from Mus musculus (Mouse).